A 285-amino-acid polypeptide reads, in one-letter code: Bifunctional protein FolD (285 aa).

NADP(+)-binding positions include 166–168 (GAS), S191, and I232.

The protein belongs to the tetrahydrofolate dehydrogenase/cyclohydrolase family. In terms of assembly, homodimer.

The enzyme catalyses (6R)-5,10-methylene-5,6,7,8-tetrahydrofolate + NADP(+) = (6R)-5,10-methenyltetrahydrofolate + NADPH. It carries out the reaction (6R)-5,10-methenyltetrahydrofolate + H2O = (6R)-10-formyltetrahydrofolate + H(+). Its pathway is one-carbon metabolism; tetrahydrofolate interconversion. In terms of biological role, catalyzes the oxidation of 5,10-methylenetetrahydrofolate to 5,10-methenyltetrahydrofolate and then the hydrolysis of 5,10-methenyltetrahydrofolate to 10-formyltetrahydrofolate. The sequence is that of Bifunctional protein FolD from Edwardsiella ictaluri (strain 93-146).